Consider the following 342-residue polypeptide: Probable transposase for insertion-like sequence element IS1161 (342 aa).

Residues 182-342 (IEERPEEINN…KKLFELTQTA (161 aa)) enclose the Integrase catalytic domain.

This sequence belongs to the transposase IS30 family.

In terms of biological role, required for the transposition of the insertion element. The sequence is that of Probable transposase for insertion-like sequence element IS1161 from Streptococcus salivarius.